The following is a 44-amino-acid chain: Benzaldehyde dehydrogenase [NAD(+)] II (44 aa).

The protein belongs to the aldehyde dehydrogenase family.

It catalyses the reaction benzaldehyde + NAD(+) + H2O = benzoate + NADH + 2 H(+). This is Benzaldehyde dehydrogenase [NAD(+)] II from Acinetobacter guillouiae (Acinetobacter genomosp. 11).